The primary structure comprises 1076 residues: Atos homolog protein A (1076 aa).

The tract at residues 24–32 (ALLITEGRT) is transactivation domain 1 (TAD1). Disordered stretches follow at residues 700–721 (ESMS…TQLN) and 739–765 (SDQL…QRRS). Positions 739-754 (SDQLKNEQDKQEDPTN) are enriched in basic and acidic residues. The segment at 878 to 935 (LLGNFEESVLNYRFDPLGIVDGFTAEVGASGAFCPTHLTLPVEVSFYSVSDDNAPSPY) is required for macropage invasion. The tract at residues 962–970 (FNPNKTVVK) is transactivation domain 2 (TAD2).

This sequence belongs to the ATOS family.

It localises to the nucleus. Transcription regulator that syncronizes transcriptional and translational programs to promote macrophage invasion of tissues. In Homo sapiens (Human), this protein is Atos homolog protein A.